The chain runs to 204 residues: Flavin-dependent thymidylate synthase (204 aa).

Residues 1-204 enclose the ThyX domain; that stretch reads MTVTLMQHTS…RYLFCLNQEG (204 aa). Residues Ser50 and 74–76 contribute to the FAD site; that span reads RHR. DUMP-binding positions include 71-74, 84-86, and Lys143; these read ELAR and SSR. The ThyX motif signature appears at 74 to 84; the sequence is RHRIASLSVKS. FAD contacts are provided by residues 159 to 161 and Asn165; that span reads NAR. Arg170 contacts dUMP. The active-site Involved in ionization of N3 of dUMP, leading to its activation is the Arg170.

The protein belongs to the thymidylate synthase ThyX family. As to quaternary structure, homotetramer. It depends on FAD as a cofactor.

It catalyses the reaction dUMP + (6R)-5,10-methylene-5,6,7,8-tetrahydrofolate + NADPH + H(+) = dTMP + (6S)-5,6,7,8-tetrahydrofolate + NADP(+). It participates in pyrimidine metabolism; dTTP biosynthesis. Catalyzes the reductive methylation of 2'-deoxyuridine-5'-monophosphate (dUMP) to 2'-deoxythymidine-5'-monophosphate (dTMP) while utilizing 5,10-methylenetetrahydrofolate (mTHF) as the methyl donor, and NADPH and FADH(2) as the reductant. This chain is Flavin-dependent thymidylate synthase, found in Wolinella succinogenes (strain ATCC 29543 / DSM 1740 / CCUG 13145 / JCM 31913 / LMG 7466 / NCTC 11488 / FDC 602W) (Vibrio succinogenes).